Reading from the N-terminus, the 338-residue chain is Holliday junction branch migration complex subunit RuvB (338 aa).

A compositionally biased stretch (basic and acidic residues) spans M1–G14. A disordered region spans residues M1 to E21. Residues N3–Y185 form a large ATPase domain (RuvB-L) region. ATP contacts are provided by residues L24, R25, G66, K69, T70, T71, E132–Y134, R175, Y185, and R222. T70 serves as a coordination point for Mg(2+). The segment at T186 to Q256 is small ATPAse domain (RuvB-S). The interval D259–N338 is head domain (RuvB-H). The DNA site is built by R314 and R319.

It belongs to the RuvB family. As to quaternary structure, homohexamer. Forms an RuvA(8)-RuvB(12)-Holliday junction (HJ) complex. HJ DNA is sandwiched between 2 RuvA tetramers; dsDNA enters through RuvA and exits via RuvB. An RuvB hexamer assembles on each DNA strand where it exits the tetramer. Each RuvB hexamer is contacted by two RuvA subunits (via domain III) on 2 adjacent RuvB subunits; this complex drives branch migration. In the full resolvosome a probable DNA-RuvA(4)-RuvB(12)-RuvC(2) complex forms which resolves the HJ.

The protein resides in the cytoplasm. The enzyme catalyses ATP + H2O = ADP + phosphate + H(+). In terms of biological role, the RuvA-RuvB-RuvC complex processes Holliday junction (HJ) DNA during genetic recombination and DNA repair, while the RuvA-RuvB complex plays an important role in the rescue of blocked DNA replication forks via replication fork reversal (RFR). RuvA specifically binds to HJ cruciform DNA, conferring on it an open structure. The RuvB hexamer acts as an ATP-dependent pump, pulling dsDNA into and through the RuvAB complex. RuvB forms 2 homohexamers on either side of HJ DNA bound by 1 or 2 RuvA tetramers; 4 subunits per hexamer contact DNA at a time. Coordinated motions by a converter formed by DNA-disengaged RuvB subunits stimulates ATP hydrolysis and nucleotide exchange. Immobilization of the converter enables RuvB to convert the ATP-contained energy into a lever motion, pulling 2 nucleotides of DNA out of the RuvA tetramer per ATP hydrolyzed, thus driving DNA branch migration. The RuvB motors rotate together with the DNA substrate, which together with the progressing nucleotide cycle form the mechanistic basis for DNA recombination by continuous HJ branch migration. Branch migration allows RuvC to scan DNA until it finds its consensus sequence, where it cleaves and resolves cruciform DNA. In Limosilactobacillus reuteri (strain DSM 20016) (Lactobacillus reuteri), this protein is Holliday junction branch migration complex subunit RuvB.